The sequence spans 459 residues: Anthocyanidin 3-O-glucoside 2''-O-glucosyltransferase (459 aa).

H20 acts as the Proton acceptor in catalysis. H20 lines the an anthocyanidin pocket. The Charge relay role is filled by D117. 7 residues coordinate UDP-alpha-D-glucose: T138, V335, Q337, H352, W355, S357, and E360. G375 lines the an anthocyanidin pocket. The UDP-alpha-D-glucose site is built by D376 and Q377.

It belongs to the UDP-glycosyltransferase family.

The catalysed reaction is an anthocyanidin 3-O-beta-D-glucoside + UDP-alpha-D-glucose = an anthocyanidin 3-O-sophoroside + UDP + 2 H(+). Its pathway is pigment biosynthesis; anthocyanin biosynthesis. Its function is as follows. Glycosyltransferase that mediates the glucosylation of anthocyanidin 3-O-glucosides to yield anthocyanidin 3-O-sophorosides. 3-O-sophoroside derivatives are required for the color of flowers. This is Anthocyanidin 3-O-glucoside 2''-O-glucosyltransferase (3GGT) from Ipomoea purpurea (Common morning glory).